The sequence spans 66 residues: Large ribosomal subunit protein bL35 (66 aa).

Belongs to the bacterial ribosomal protein bL35 family.

This Brucella canis (strain ATCC 23365 / NCTC 10854 / RM-666) protein is Large ribosomal subunit protein bL35.